Reading from the N-terminus, the 165-residue chain is NADPH-dependent 7-cyano-7-deazaguanine reductase (165 aa).

The Thioimide intermediate role is filled by C56. D63 serves as the catalytic Proton donor. Residues 78-80 (VES) and 97-98 (HE) contribute to the substrate site.

This sequence belongs to the GTP cyclohydrolase I family. QueF type 1 subfamily.

It localises to the cytoplasm. The catalysed reaction is 7-aminomethyl-7-carbaguanine + 2 NADP(+) = 7-cyano-7-deazaguanine + 2 NADPH + 3 H(+). The protein operates within tRNA modification; tRNA-queuosine biosynthesis. Its function is as follows. Catalyzes the NADPH-dependent reduction of 7-cyano-7-deazaguanine (preQ0) to 7-aminomethyl-7-deazaguanine (preQ1). The polypeptide is NADPH-dependent 7-cyano-7-deazaguanine reductase (Geobacillus thermodenitrificans (strain NG80-2)).